We begin with the raw amino-acid sequence, 183 residues long: Inosine/xanthosine triphosphatase (183 aa).

Asp-75 provides a ligand contact to Mg(2+). Substrate is bound at residue 75 to 76 (DG).

Belongs to the YjjX NTPase family. Homodimer. Mg(2+) serves as cofactor. It depends on Mn(2+) as a cofactor.

It catalyses the reaction XTP + H2O = XDP + phosphate + H(+). It carries out the reaction ITP + H2O = IDP + phosphate + H(+). Functionally, phosphatase that hydrolyzes non-canonical purine nucleotides such as XTP and ITP to their respective diphosphate derivatives. Probably excludes non-canonical purines from DNA/RNA precursor pool, thus preventing their incorporation into DNA/RNA and avoiding chromosomal lesions. The protein is Inosine/xanthosine triphosphatase of Vibrio vulnificus (strain YJ016).